The chain runs to 163 residues: MIYIYFIYLKQDDPKKSTMRKLERFGIARRISPGGARDKLMLTRSADTVLSKNDRFIAERSGICVIEGSWNREDTFAGLRFPYGRRLPKLLAANPVNYGKLEKLSSIEAVAAALYIMGFQDDASAILSKYTWGQNFLQLNKNPLDEYREADPEKIPEIENAYF.

T18, I66, L87, and S106 together coordinate S-adenosyl-L-methionine.

This sequence belongs to the TDD superfamily. TSR3 family.

Its subcellular location is the cytoplasm. It catalyses the reaction an N(1)-methylpseudouridine in rRNA + S-adenosyl-L-methionine = N(1)-methyl-N(3)-[(3S)-3-amino-3-carboxypropyl]pseudouridine in rRNA + S-methyl-5'-thioadenosine + H(+). Aminocarboxypropyltransferase that catalyzes the aminocarboxypropyl transfer on pseudouridine corresponding to position 914 in M.jannaschii 16S rRNA. It constitutes the last step in biosynthesis of the hypermodified N1-methyl-N3-(3-amino-3-carboxypropyl) pseudouridine (m1acp3-Psi). This Thermoplasma acidophilum (strain ATCC 25905 / DSM 1728 / JCM 9062 / NBRC 15155 / AMRC-C165) protein is 16S rRNA aminocarboxypropyltransferase.